Reading from the N-terminus, the 344-residue chain is MVKVGIVGGTGYTGVELLRLLAQHPQAEVVVITSRSEAGLAVADMYPNLRGHYDGLAFSVPDIKTLGACDVVFFATPHGVAHALAGELLAAGTKVIDLSADFRLQDADEWAKWYGQPHGAPELLDEAVYGLPEVNREQIRKARLIAVPGCYPTATQLGFLPLLEAGIADASHLIADCKSGVSGAGRGAAVGSLYSETSESMKAYAVKGHRHLPEIRQGLRRAAGKDVGLTFVPHLTPMIRGIHSTLYATVVDRSVDLQALFEKRYANEPFVDVMPAGSHPETRSVRGANVCRIAVHRPQDGDLVVVLSVIDNLVKGASGQAVQNMNILFGLDERLGLSHAGMLP.

Cys-150 is an active-site residue.

It belongs to the NAGSA dehydrogenase family. Type 1 subfamily.

The protein resides in the cytoplasm. It carries out the reaction N-acetyl-L-glutamate 5-semialdehyde + phosphate + NADP(+) = N-acetyl-L-glutamyl 5-phosphate + NADPH + H(+). The protein operates within amino-acid biosynthesis; L-arginine biosynthesis; N(2)-acetyl-L-ornithine from L-glutamate: step 3/4. Functionally, catalyzes the NADPH-dependent reduction of N-acetyl-5-glutamyl phosphate to yield N-acetyl-L-glutamate 5-semialdehyde. This chain is N-acetyl-gamma-glutamyl-phosphate reductase, found in Pseudomonas fluorescens (strain Pf0-1).